We begin with the raw amino-acid sequence, 132 residues long: MLTAAVLSCALLLALPATRGAQMGLAPMEGIRRPDQALLPELPGLGLRAPLKKTTAEQAEEDLLQEAQALAEVLDLQDREPRSSRRCVRLHESCLGQQVPCCDPCATCYCRFFNAFCYCRKLGTAMNPCSRT.

A signal peptide spans 1–20; the sequence is MLTAAVLSCALLLALPATRG. Residues 21–82 constitute a propeptide that is removed on maturation; the sequence is AQMGLAPMEG…VLDLQDREPR (62 aa). 5 disulfides stabilise this stretch: cysteine 87-cysteine 102, cysteine 94-cysteine 108, cysteine 101-cysteine 119, cysteine 105-cysteine 129, and cysteine 110-cysteine 117. The Agouti domain maps to 87–129; the sequence is CVRLHESCLGQQVPCCDPCATCYCRFFNAFCYCRKLGTAMNPC. Positions 111–113 are interaction with melanocortin receptors; that stretch reads RFF.

In terms of assembly, interacts with melanocortin receptors MC3R, MC4R and MC5R. In terms of tissue distribution, expressed primarily in the adrenal gland, subthalamic nucleus, and hypothalamus, with a lower level of expression occurring in testis, lung, and kidney.

The protein localises to the secreted. It localises to the golgi apparatus lumen. Functionally, plays a role in weight homeostasis. Involved in the control of feeding behavior through the central melanocortin system. Acts as alpha melanocyte-stimulating hormone antagonist by inhibiting cAMP production mediated by stimulation of melanocortin receptors within the hypothalamus and adrenal gland. Has very low activity with MC5R. Is an inverse agonist for MC3R and MC4R being able to suppress their constitutive activity. It promotes MC3R and MC4R endocytosis in an arrestin-dependent manner. This is Agouti-related protein (AGRP) from Homo sapiens (Human).